The chain runs to 109 residues: Nucleoid-associated protein ETA_24730 (109 aa).

Belongs to the YbaB/EbfC family. In terms of assembly, homodimer.

It is found in the cytoplasm. Its subcellular location is the nucleoid. Its function is as follows. Binds to DNA and alters its conformation. May be involved in regulation of gene expression, nucleoid organization and DNA protection. The chain is Nucleoid-associated protein ETA_24730 from Erwinia tasmaniensis (strain DSM 17950 / CFBP 7177 / CIP 109463 / NCPPB 4357 / Et1/99).